The chain runs to 338 residues: Solute carrier family 35 member G5 (338 aa).

Residues 1–27 form a disordered region; the sequence is MAGSHPYFNLPDSTHPSPPSAPPSLRW. Helical transmembrane passes span 37–57, 67–87, 102–122, 160–180, 190–210, 221–241, 250–270, 281–301, and 305–325; these read TNGL…VGPL, LPSL…ALLL, GWAC…YSAV, CGLL…LWTL, TLGY…LLVY, TVAF…LFVL, LLSW…FTCV, LVCA…YYML, and VALS…IITA. Residues 49 to 174 enclose the EamA 1 domain; it reads LPAGFVGPLS…SILGLIIILG (126 aa). One can recognise an EamA 2 domain in the interval 272–325; the sequence is YAVTKAHPALVCAVLHSEVVVALILQYYMLHETVALSDIMGAGVVLGSIAIITA.

The protein belongs to the SLC35G solute transporter family. Expressed in placenta and testis.

Its subcellular location is the membrane. This is Solute carrier family 35 member G5 (SLC35G5) from Homo sapiens (Human).